We begin with the raw amino-acid sequence, 201 residues long: UPF0056 membrane protein PYRAB13050 (201 aa).

A run of 6 helical transmembrane segments spans residues 8-28, 49-69, 73-93, 111-131, 140-160, and 181-201; these read FAVL…VPIF, ITVL…FKFF, VDAF…EMLS, VAVI…TTVM, PIVI…LASG, and LILT…AFGI.

This sequence belongs to the UPF0056 (MarC) family.

The protein resides in the cell membrane. This chain is UPF0056 membrane protein PYRAB13050, found in Pyrococcus abyssi (strain GE5 / Orsay).